The following is a 196-amino-acid chain: dTTP/UTP pyrophosphatase (196 aa).

The Proton acceptor role is filled by aspartate 75.

This sequence belongs to the Maf family. YhdE subfamily. A divalent metal cation serves as cofactor.

It is found in the cytoplasm. The enzyme catalyses dTTP + H2O = dTMP + diphosphate + H(+). The catalysed reaction is UTP + H2O = UMP + diphosphate + H(+). In terms of biological role, nucleoside triphosphate pyrophosphatase that hydrolyzes dTTP and UTP. May have a dual role in cell division arrest and in preventing the incorporation of modified nucleotides into cellular nucleic acids. This is dTTP/UTP pyrophosphatase from Wolbachia pipientis subsp. Culex pipiens (strain wPip).